The primary structure comprises 271 residues: Formamidopyrimidine-DNA glycosylase (271 aa).

P2 serves as the catalytic Schiff-base intermediate with DNA. E3 serves as the catalytic Proton donor. Catalysis depends on K57, which acts as the Proton donor; for beta-elimination activity. DNA is bound by residues H90, R109, and K150. The segment at L235–K269 adopts an FPG-type zinc-finger fold. The Proton donor; for delta-elimination activity role is filled by R259.

Belongs to the FPG family. As to quaternary structure, monomer. The cofactor is Zn(2+).

It carries out the reaction Hydrolysis of DNA containing ring-opened 7-methylguanine residues, releasing 2,6-diamino-4-hydroxy-5-(N-methyl)formamidopyrimidine.. The catalysed reaction is 2'-deoxyribonucleotide-(2'-deoxyribose 5'-phosphate)-2'-deoxyribonucleotide-DNA = a 3'-end 2'-deoxyribonucleotide-(2,3-dehydro-2,3-deoxyribose 5'-phosphate)-DNA + a 5'-end 5'-phospho-2'-deoxyribonucleoside-DNA + H(+). Its function is as follows. Involved in base excision repair of DNA damaged by oxidation or by mutagenic agents. Acts as a DNA glycosylase that recognizes and removes damaged bases. Has a preference for oxidized purines, such as 7,8-dihydro-8-oxoguanine (8-oxoG). Has AP (apurinic/apyrimidinic) lyase activity and introduces nicks in the DNA strand. Cleaves the DNA backbone by beta-delta elimination to generate a single-strand break at the site of the removed base with both 3'- and 5'-phosphates. This is Formamidopyrimidine-DNA glycosylase from Haemophilus influenzae (strain 86-028NP).